The following is an 892-amino-acid chain: Protein CLEC16A homolog (892 aa).

Residues 48-194 form the FPL domain; it reads LRAIAEILIW…AVRNILLNIV (147 aa). The segment covering 844-856 has biased composition (low complexity); that stretch reads SVRKTVSTSSSSS. The tract at residues 844–892 is disordered; that stretch reads SVRKTVSTSSSSSQGRPGHYSANLRSASRNAGMIPDDPTQPSSSSERRS. The segment covering 882–892 has biased composition (polar residues); it reads TQPSSSSERRS.

This sequence belongs to the CLEC16A/gop-1 family.

In terms of biological role, regulator of mitophagy. In Caenorhabditis elegans, this protein is Protein CLEC16A homolog (gop-1).